The following is a 225-amino-acid chain: Cytidylate kinase (225 aa).

Position 11-19 (11-19 (GPAAAGKST)) interacts with ATP.

Belongs to the cytidylate kinase family. Type 1 subfamily.

Its subcellular location is the cytoplasm. It carries out the reaction CMP + ATP = CDP + ADP. It catalyses the reaction dCMP + ATP = dCDP + ADP. The chain is Cytidylate kinase from Bacillus cereus (strain B4264).